Consider the following 213-residue polypeptide: ATP synthase peripheral stalk subunit OSCP, mitochondrial (213 aa).

The N-terminal 23 residues, 1-23 (MAAPAASGLSRQVRSFSTSVVRP), are a transit peptide targeting the mitochondrion. The SIFI-degron motif lies at 5–23 (AASGLSRQVRSFSTSVVRP). K54, K60, K70, and K73 each carry N6-acetyllysine. K90 carries the N6-succinyllysine modification. N6-acetyllysine; alternate is present on residues K100, K158, and K162. An N6-succinyllysine; alternate mark is found at K100, K158, and K162. An N6-acetyllysine mark is found at K172, K176, and K192. N6-succinyllysine is present on K199.

It belongs to the ATPase delta chain family. As to quaternary structure, component of the ATP synthase complex composed at least of ATP5F1A/subunit alpha, ATP5F1B/subunit beta, ATP5MC1/subunit c (homooctomer), MT-ATP6/subunit a, MT-ATP8/subunit 8, ATP5ME/subunit e, ATP5MF/subunit f, ATP5MG/subunit g, ATP5MK/subunit k, ATP5MJ/subunit j, ATP5F1C/subunit gamma, ATP5F1D/subunit delta, ATP5F1E/subunit epsilon, ATP5PF/subunit F6, ATP5PB/subunit b, ATP5PD/subunit d, ATP5PO/subunit OSCP. ATP synthase complex consists of a soluble F(1) head domain (subunits alpha(3) and beta(3)) - the catalytic core - and a membrane F(0) domain - the membrane proton channel (subunits c, a, 8, e, f, g, k and j). These two domains are linked by a central stalk (subunits gamma, delta, and epsilon) rotating inside the F1 region and a stationary peripheral stalk (subunits F6, b, d, and OSCP). Acetylation of Lys-70 and Lys-158 is observed in liver mitochondria from fasted mice but not from fed mice. In terms of processing, acetylation at Lys-162 decreases ATP production. Deacetylated by SIRT3. Post-translationally, in response to mitochondrial stress, the precursor protein is ubiquitinated by the SIFI complex in the cytoplasm before mitochondrial import, leading to its degradation. Within the SIFI complex, UBR4 initiates ubiquitin chain that are further elongated or branched by KCMF1.

Its subcellular location is the mitochondrion. The protein localises to the mitochondrion inner membrane. Its function is as follows. Subunit OSCP, of the mitochondrial membrane ATP synthase complex (F(1)F(0) ATP synthase or Complex V) that produces ATP from ADP in the presence of a proton gradient across the membrane which is generated by electron transport complexes of the respiratory chain. ATP synthase complex consist of a soluble F(1) head domain - the catalytic core - and a membrane F(1) domain - the membrane proton channel. These two domains are linked by a central stalk rotating inside the F(1) region and a stationary peripheral stalk. During catalysis, ATP synthesis in the catalytic domain of F(1) is coupled via a rotary mechanism of the central stalk subunits to proton translocation. In vivo, can only synthesize ATP although its ATP hydrolase activity can be activated artificially in vitro. Part of the complex F(0) domain. Part of the complex F(0) domain and the peripheric stalk, which acts as a stator to hold the catalytic alpha(3)beta(3) subcomplex and subunit a/ATP6 static relative to the rotary elements. This is ATP synthase peripheral stalk subunit OSCP, mitochondrial from Mus musculus (Mouse).